The primary structure comprises 188 residues: Elongation factor P (188 aa).

It belongs to the elongation factor P family.

It localises to the cytoplasm. The protein operates within protein biosynthesis; polypeptide chain elongation. In terms of biological role, involved in peptide bond synthesis. Stimulates efficient translation and peptide-bond synthesis on native or reconstituted 70S ribosomes in vitro. Probably functions indirectly by altering the affinity of the ribosome for aminoacyl-tRNA, thus increasing their reactivity as acceptors for peptidyl transferase. The sequence is that of Elongation factor P from Phenylobacterium zucineum (strain HLK1).